Consider the following 82-residue polypeptide: Penaeidin-3e (82 aa).

A signal peptide spans 1–19 (MRLVVCLVFLAPFALVCHG). Position 20 is a pyrrolidone carboxylic acid (Gln20). Cystine bridges form between Cys51–Cys66, Cys55–Cys73, and Cys67–Cys74. Serine amide is present on Ser81.

The protein belongs to the penaeidin family.

It localises to the cytoplasmic granule. Antibacterial and antifungal activity. Presents chitin-binding activity. The sequence is that of Penaeidin-3e from Penaeus vannamei (Whiteleg shrimp).